Reading from the N-terminus, the 355-residue chain is MAASHALKPILELLPEELPGEGYRRAQIAHWLYAKGARDFSEMTDLPKALREALAREWRLSEFSLVQAFPSQDGSVKYLFTLLDGKKTEAVYMPYENRKTVCLSTMVGCPAGCTFCATGALGFGRNLTAAEILDQLLTIAYHQGLSPREIRNVVLMGMGEPLLNLRNVLKAVRIMLHKKALALSPRRVTLSTVGIPKGIYRLAEEDLGVRLALSLHAPDDETRRKIIPTAHRYPIAEIMEAVRHYHAKTKRRVTFEYTLLKGVNDHLWQARLLAKLLKGLSAHVNLIPFNPWEGAPVVGTPRAGVLAFAEELKRLGVPTSIRWSRGQDVGAACGQLALKVPRPLTLTPLPGGAGR.

E89 functions as the Proton acceptor in the catalytic mechanism. Residues 95–322 enclose the Radical SAM core domain; the sequence is YENRKTVCLS…KRLGVPTSIR (228 aa). The cysteines at positions 102 and 333 are disulfide-linked. Positions 109, 113, and 116 each coordinate [4Fe-4S] cluster. Residues 159-160, S191, 214-216, and N290 contribute to the S-adenosyl-L-methionine site; these read GE and SLH. C333 functions as the S-methylcysteine intermediate in the catalytic mechanism.

This sequence belongs to the radical SAM superfamily. RlmN family. Requires [4Fe-4S] cluster as cofactor.

It is found in the cytoplasm. The enzyme catalyses adenosine(2503) in 23S rRNA + 2 reduced [2Fe-2S]-[ferredoxin] + 2 S-adenosyl-L-methionine = 2-methyladenosine(2503) in 23S rRNA + 5'-deoxyadenosine + L-methionine + 2 oxidized [2Fe-2S]-[ferredoxin] + S-adenosyl-L-homocysteine. The catalysed reaction is adenosine(37) in tRNA + 2 reduced [2Fe-2S]-[ferredoxin] + 2 S-adenosyl-L-methionine = 2-methyladenosine(37) in tRNA + 5'-deoxyadenosine + L-methionine + 2 oxidized [2Fe-2S]-[ferredoxin] + S-adenosyl-L-homocysteine. Its function is as follows. Specifically methylates position 2 of adenine 2503 in 23S rRNA and position 2 of adenine 37 in tRNAs. In Thermus thermophilus (strain ATCC 27634 / DSM 579 / HB8), this protein is Probable dual-specificity RNA methyltransferase RlmN.